The primary structure comprises 194 residues: Peroxynitrite isomerase 1 (194 aa).

A GXWXGXG motif is present at residues 40-46; sequence GVWRGEG. Heme b-binding residues include lysine 157 and histidine 184.

It belongs to the nitrobindin family. In terms of assembly, homodimer. Heme b serves as cofactor.

It carries out the reaction peroxynitrite = nitrate. It functions in the pathway nitrogen metabolism. Heme-binding protein able to scavenge peroxynitrite and to protect free L-tyrosine against peroxynitrite-mediated nitration, by acting as a peroxynitrite isomerase that converts peroxynitrite to nitrate. Therefore, this protein likely plays a role in peroxynitrite sensing and in the detoxification of reactive nitrogen and oxygen species (RNS and ROS, respectively). Is able to bind nitric oxide (NO) in vitro, but may act as a sensor of peroxynitrite levels in vivo. In Mycobacterium ulcerans (strain Agy99), this protein is Peroxynitrite isomerase 1.